Consider the following 94-residue polypeptide: Integration host factor subunit beta (94 aa).

The protein belongs to the bacterial histone-like protein family. Heterodimer of an alpha and a beta chain.

Its function is as follows. This protein is one of the two subunits of integration host factor, a specific DNA-binding protein that functions in genetic recombination as well as in transcriptional and translational control. This Haemophilus influenzae (strain PittGG) protein is Integration host factor subunit beta.